Here is a 97-residue protein sequence, read N- to C-terminus: MIVPRLALPISLALQRVSRRVAEHPHNLRILQRHMSSVYFRSGAIKPKPEEMPFGLLAIFCAVIPGLFVGATISKNVANFLEENDLFVPADDDDDED.

A mitochondrion-targeting transit peptide spans 1–35; the sequence is MIVPRLALPISLALQRVSRRVAEHPHNLRILQRHM. A helical membrane pass occupies residues 53-73; that stretch reads PFGLLAIFCAVIPGLFVGATI.

This sequence belongs to the SMDT1/EMRE family.

Its subcellular location is the mitochondrion inner membrane. In terms of biological role, essential regulatory subunit of the mitochondrial calcium uniporter MCU channel, a protein that mediates calcium uptake into mitochondria. This is Essential MCU regulator, mitochondrial from Drosophila melanogaster (Fruit fly).